The sequence spans 89 residues: Small ribosomal subunit protein uS15 (89 aa).

It belongs to the universal ribosomal protein uS15 family. As to quaternary structure, part of the 30S ribosomal subunit. Forms a bridge to the 50S subunit in the 70S ribosome, contacting the 23S rRNA.

In terms of biological role, one of the primary rRNA binding proteins, it binds directly to 16S rRNA where it helps nucleate assembly of the platform of the 30S subunit by binding and bridging several RNA helices of the 16S rRNA. Functionally, forms an intersubunit bridge (bridge B4) with the 23S rRNA of the 50S subunit in the ribosome. The polypeptide is Small ribosomal subunit protein uS15 (Edwardsiella ictaluri (strain 93-146)).